We begin with the raw amino-acid sequence, 172 residues long: C-phycocyanin beta chain (172 aa).

N72 is modified (N4-methylasparagine). (2R,3E)-phycocyanobilin is bound by residues C82 and C153.

The protein belongs to the phycobiliprotein family. As to quaternary structure, heterodimer of an alpha and a beta subunit, which further assembles into trimers and the trimers into hexamers. The basic functional unit of phycobiliproteins is a ring-shaped hexamer formed from two back-to-back trimers contacting via the alpha chain subunits. The trimers are composed of alpha/beta subunit heterodimers arranged around a three-fold axis of symmetry. The phycoerythrins also contain a gamma subunit which is located in the center of the hexamer. In terms of processing, contains two covalently linked bilin chromophores.

It is found in the plastid. The protein localises to the chloroplast thylakoid membrane. Functionally, light-harvesting photosynthetic bile pigment-protein from the phycobiliprotein complex (phycobilisome, PBS). Phycocyanin is the major phycobiliprotein in the PBS rod. The polypeptide is C-phycocyanin beta chain (cpcB) (Rhodella violacea (Red alga)).